A 545-amino-acid polypeptide reads, in one-letter code: Chaperonin GroEL (545 aa).

ATP is bound by residues 30–33 (TLGP), lysine 51, 87–91 (DGTTT), glycine 415, 479–481 (NAA), and aspartate 495.

This sequence belongs to the chaperonin (HSP60) family. As to quaternary structure, forms a cylinder of 14 subunits composed of two heptameric rings stacked back-to-back. Interacts with the co-chaperonin GroES.

Its subcellular location is the cytoplasm. It carries out the reaction ATP + H2O + a folded polypeptide = ADP + phosphate + an unfolded polypeptide.. Together with its co-chaperonin GroES, plays an essential role in assisting protein folding. The GroEL-GroES system forms a nano-cage that allows encapsulation of the non-native substrate proteins and provides a physical environment optimized to promote and accelerate protein folding. This is Chaperonin GroEL from Cellvibrio japonicus (strain Ueda107) (Pseudomonas fluorescens subsp. cellulosa).